The sequence spans 729 residues: Transient receptor potential cation channel subfamily V member 5 (729 aa).

Residues 1-327 (MGGFLPKAEG…SFKWNKYGRP (327 aa)) are Cytoplasmic-facing. ANK repeat units lie at residues 44–74 (ILESPLLRASKENDLSVLRQLLLDCTCDVRQ), 78–107 (LGETALHIAALYDNLEAALVLMEAAPELVF), 116–145 (AGQTALHIAVVNQNVNLVRALLTRRASVSA), 162–191 (FGEHPLSFAACVNSEEIVRLLIEHGADIRA), 195–228 (LGNTVLHILILQPNKTFACQMYNLLLSYDGHGDH), and 239–268 (QGLTPFKLAGVEGNTVMFQHLMQKRRHIQW). The helical transmembrane segment at 328–348 (YFCILAALYLLYMICFTTCCV) threads the bilayer. The Extracellular portion of the chain corresponds to 349–385 (YRPLKFRGGNRTHSRDITILQQKLLQEAYETREDIIR). Residue N358 is glycosylated (N-linked (GlcNAc...) asparagine). The chain crosses the membrane as a helical span at residues 386–408 (LVGELVSIVGAVIILLLEIPDIF). Topologically, residues 409 to 419 (RVGASRYFGKT) are cytoplasmic. A helical membrane pass occupies residues 420–442 (ILGGPFHVIIITYASLVLVTMVM). Residues 443–448 (RLTNTN) lie on the Extracellular side of the membrane. A helical membrane pass occupies residues 449–469 (GEVVPMSFALVLGWCSVMYFT). Topologically, residues 470–492 (RGFQMLGPFTIMIQKMIFGDLMR) are cytoplasmic. Residues 493 to 513 (FCWLMAVVILGFASAFYIIFQ) form a helical membrane-spanning segment. Residues 524 to 544 (YDYPMALFTTFELFLTVIDAP) constitute an intramembrane region (pore-forming). D542 is a Ca(2+) binding site. The chain crosses the membrane as a helical span at residues 557–577 (IVNFAFTIIATLLMLNLFIAM). Residues 578-729 (MGDTHWRVAQ…EGDGEEVYHF (152 aa)) are Cytoplasmic-facing. Residues 598–602 (VATTV) form an interaction with S100A10 region. The segment at 650–653 (VFKN) is involved in Ca(2+)-dependent inactivation. Basic and acidic residues predominate over residues 654 to 665 (SDKEDDQEHPSE). Residues 654-675 (SDKEDDQEHPSEKQPSGAESGT) are disordered. T685 is modified (phosphothreonine). S689 carries the phosphoserine modification. The involved in Ca(2+)-dependent inactivation stretch occupies residues 700-729 (GWEILRQNTLGHLNLGLNLSEGDGEEVYHF).

Belongs to the transient receptor (TC 1.A.4) family. TrpV subfamily. TRPV5 sub-subfamily. In terms of assembly, homotetramer and probably heterotetramer with TRPV6. Interacts with TRPV6. Interacts with S100A10 and probably with the ANAX2-S100A10 heterotetramer. The interaction with S100A10 is required for the trafficking to the plasma membrane. Interacts with calmodulin. Interacts with BSPRY, which results in its inactivation. Glycosylated. In terms of tissue distribution, expressed at high levels in kidney, small intestine and pancreas, and at lower levels in testis, prostate, placenta, brain, colon and rectum.

The protein resides in the apical cell membrane. The enzyme catalyses Ca(2+)(in) = Ca(2+)(out). Its activity is regulated as follows. Activated by WNK3. Constitutively active calcium selective cation channel thought to be involved in Ca(2+) reabsorption in kidney and intestine. Required for normal Ca(2+) reabsorption in the kidney distal convoluted tubules. The channel is activated by low internal calcium level and the current exhibits an inward rectification. A Ca(2+)-dependent feedback regulation includes fast channel inactivation and slow current decay. Heteromeric assembly with TRPV6 seems to modify channel properties. TRPV5-TRPV6 heteromultimeric concatemers exhibit voltage-dependent gating. The polypeptide is Transient receptor potential cation channel subfamily V member 5 (TRPV5) (Homo sapiens (Human)).